A 335-amino-acid polypeptide reads, in one-letter code: tRNA N6-adenosine threonylcarbamoyltransferase (335 aa).

A divalent metal cation is bound by residues His-109, His-113, and Tyr-130. Substrate is bound by residues 130–134 (YVSGG), Asp-162, Gly-177, Glu-181, and Asn-266. A divalent metal cation is bound at residue Asp-294.

Belongs to the KAE1 / TsaD family. Component of the EKC/KEOPS complex composed of at least GON7, TP53RK, TPRKB, OSGEP and LAGE3; the whole complex dimerizes. A divalent metal cation is required as a cofactor.

Its subcellular location is the cytoplasm. The protein localises to the nucleus. The enzyme catalyses L-threonylcarbamoyladenylate + adenosine(37) in tRNA = N(6)-L-threonylcarbamoyladenosine(37) in tRNA + AMP + H(+). In terms of biological role, component of the EKC/KEOPS complex that is required for the formation of a threonylcarbamoyl group on adenosine at position 37 (t(6)A37) in tRNAs that read codons beginning with adenine. The complex is probably involved in the transfer of the threonylcarbamoyl moiety of threonylcarbamoyl-AMP (TC-AMP) to the N6 group of A37. OSGEP likely plays a direct catalytic role in this reaction, but requires other protein(s) of the complex to fulfill this activity. The protein is tRNA N6-adenosine threonylcarbamoyltransferase of Bos taurus (Bovine).